A 358-amino-acid polypeptide reads, in one-letter code: UDP-N-acetylglucosamine--N-acetylmuramyl-(pentapeptide) pyrophosphoryl-undecaprenol N-acetylglucosamine transferase (358 aa).

Residues 11-13 (TAG), asparagine 125, arginine 162, serine 196, and glutamine 288 contribute to the UDP-N-acetyl-alpha-D-glucosamine site.

The protein belongs to the glycosyltransferase 28 family. MurG subfamily.

It localises to the cell membrane. It carries out the reaction di-trans,octa-cis-undecaprenyl diphospho-N-acetyl-alpha-D-muramoyl-L-alanyl-D-glutamyl-meso-2,6-diaminopimeloyl-D-alanyl-D-alanine + UDP-N-acetyl-alpha-D-glucosamine = di-trans,octa-cis-undecaprenyl diphospho-[N-acetyl-alpha-D-glucosaminyl-(1-&gt;4)]-N-acetyl-alpha-D-muramoyl-L-alanyl-D-glutamyl-meso-2,6-diaminopimeloyl-D-alanyl-D-alanine + UDP + H(+). The protein operates within cell wall biogenesis; peptidoglycan biosynthesis. In terms of biological role, cell wall formation. Catalyzes the transfer of a GlcNAc subunit on undecaprenyl-pyrophosphoryl-MurNAc-pentapeptide (lipid intermediate I) to form undecaprenyl-pyrophosphoryl-MurNAc-(pentapeptide)GlcNAc (lipid intermediate II). In Leifsonia xyli subsp. xyli (strain CTCB07), this protein is UDP-N-acetylglucosamine--N-acetylmuramyl-(pentapeptide) pyrophosphoryl-undecaprenol N-acetylglucosamine transferase.